The chain runs to 83 residues: Snake venom metalloproteinase BnP1 (83 aa).

Residues 8–83 (SYIELAVVAD…NPQCIINQPI (76 aa)) form the Peptidase M12B domain. Residues Glu11, Cys77, and Asn80 each coordinate Ca(2+).

The protein belongs to the venom metalloproteinase (M12B) family. P-I subfamily. As to quaternary structure, monomer. Zn(2+) is required as a cofactor. In terms of tissue distribution, expressed by the venom gland.

It is found in the secreted. Inhibited by EDTA. Functionally, this protein is a zinc protease from snake venom that is devoid of significant myotoxic and hemorrhagic activities. It hydrolyzes the Aalpha-chain and more slowly the Bbeta-chain of fibrin and fibrinogen, without affecting the gamma-chains. It induces cell detachment and a apoptosis (anoikis) in endothelial cells. The protein is Snake venom metalloproteinase BnP1 of Bothrops pauloensis (Neuwied's lancehead).